A 132-amino-acid chain; its full sequence is MSGGKGKAGTSEKASTSRSAKAGLTFPVGRVHRLLRKGNYAQRIGSGAPVYLTSVLEYLAAEILELAGNAARDNKKSRIIPRHLQLAIRNDEELNKLLGDVTIAQGGVLPNIHQNLLPKKSGKGGVKASQEL.

The tract at residues 1–21 (MSGGKGKAGTSEKASTSRSAK) is disordered. Ser-2 is subject to N-acetylserine. Lys-5 and Lys-7 each carry N6-acetyllysine. Gln-105 is modified (N5-methylglutamine). At Ser-129 the chain carries Phosphoserine. The [ST]-Q motif motif lies at 129–130 (SQ).

This sequence belongs to the histone H2A family. The nucleosome is a histone octamer containing two molecules each of H2A, H2B, H3 and H4 assembled in one H3-H4 heterotetramer and two H2A-H2B heterodimers. The octamer wraps approximately 147 bp of DNA. In terms of processing, phosphorylated to form H2AS128ph (gamma-H2A) in response to DNA double-strand breaks (DSBs) generated by exogenous genotoxic agents and by stalled replication forks. Phosphorylation is dependent on the DNA damage checkpoint kinases MEC1/ATR and TEL1/ATM, spreads on either side of a detected DSB site and may mark the surrounding chromatin for recruitment of proteins required for DNA damage signaling and repair. Gamma-H2A is removed from the DNA prior to the strand invasion-primer extension step of the repair process and subsequently dephosphorylated. Dephosphorylation is necessary for efficient recovery from the DNA damage checkpoint. Acetylated by ESA1 to form H2AK4ac and H2AK7ac.

It localises to the nucleus. It is found in the chromosome. Its function is as follows. Core component of nucleosome which plays a central role in DNA double strand break (DSB) repair. Nucleosomes wrap and compact DNA into chromatin, limiting DNA accessibility to the cellular machineries which require DNA as a template. Histones thereby play a central role in transcription regulation, DNA repair, DNA replication and chromosomal stability. DNA accessibility is regulated via a complex set of post-translational modifications of histones, also called histone code, and nucleosome remodeling. The sequence is that of Histone H2A.1 (HTA1) from Candida albicans (strain SC5314 / ATCC MYA-2876) (Yeast).